The following is a 431-amino-acid chain: D-inositol 3-phosphate glycosyltransferase (431 aa).

Position 14 (histidine 14) interacts with 1D-myo-inositol 3-phosphate. Residues 20–21 (QP) and glycine 28 contribute to the UDP-N-acetyl-alpha-D-glucosamine site. Residues 25–30 (DAGGMN), lysine 83, tyrosine 116, threonine 140, and arginine 160 contribute to the 1D-myo-inositol 3-phosphate site. UDP-N-acetyl-alpha-D-glucosamine-binding residues include arginine 240 and lysine 245. The Mg(2+) site is built by tyrosine 315, arginine 316, and alanine 318. Positions 328 and 336 each coordinate UDP-N-acetyl-alpha-D-glucosamine. Threonine 342 serves as a coordination point for Mg(2+).

It belongs to the glycosyltransferase group 1 family. MshA subfamily. Homodimer.

The catalysed reaction is 1D-myo-inositol 3-phosphate + UDP-N-acetyl-alpha-D-glucosamine = 1D-myo-inositol 2-acetamido-2-deoxy-alpha-D-glucopyranoside 3-phosphate + UDP + H(+). Catalyzes the transfer of a N-acetyl-glucosamine moiety to 1D-myo-inositol 3-phosphate to produce 1D-myo-inositol 2-acetamido-2-deoxy-glucopyranoside 3-phosphate in the mycothiol biosynthesis pathway. The protein is D-inositol 3-phosphate glycosyltransferase of Thermomonospora curvata (strain ATCC 19995 / DSM 43183 / JCM 3096 / KCTC 9072 / NBRC 15933 / NCIMB 10081 / Henssen B9).